Consider the following 450-residue polypeptide: UDP-N-acetylmuramoylalanine--D-glutamate ligase (450 aa).

An ATP-binding site is contributed by 119 to 125 (GSNGKTT).

It belongs to the MurCDEF family.

It is found in the cytoplasm. It carries out the reaction UDP-N-acetyl-alpha-D-muramoyl-L-alanine + D-glutamate + ATP = UDP-N-acetyl-alpha-D-muramoyl-L-alanyl-D-glutamate + ADP + phosphate + H(+). It participates in cell wall biogenesis; peptidoglycan biosynthesis. In terms of biological role, cell wall formation. Catalyzes the addition of glutamate to the nucleotide precursor UDP-N-acetylmuramoyl-L-alanine (UMA). This chain is UDP-N-acetylmuramoylalanine--D-glutamate ligase, found in Bacillus cereus (strain ATCC 10987 / NRS 248).